Reading from the N-terminus, the 1040-residue chain is Protocadherin-10 (1040 aa).

The N-terminal stretch at 1-18 is a signal peptide; it reads MIVLLLFALLWMVEGVFS. 6 consecutive Cadherin domains span residues 19–122, 123–250, 251–358, 359–463, 464–574, and 582–690; these read QLHY…PPSF, PEPD…VPAF, DQPV…APEI, SFST…APRF, SQPV…APAI, and NGTP…GGGG. Over 19-715 the chain is Extracellular; that stretch reads QLHYTVQEEQ…GGGETSLDLT (697 aa). Residues 207–223 are compositionally biased toward gly residues; that stretch reads GGGGGVGEGGGGGGGAG. Positions 207-228 are disordered; the sequence is GGGGGVGEGGGGGGGAGLPPQQ. Asn-273 carries N-linked (GlcNAc...) asparagine glycosylation. Asn-557 is a glycosylation site (N-linked (GlcNAc...) asparagine). The segment covering 686-697 has biased composition (gly residues); it reads QGGGGSGGGGSG. The segment at 686–708 is disordered; the sequence is QGGGGSGGGGSGEHQRPSRSGGG. Residues 716-736 form a helical membrane-spanning segment; sequence LILIIALGSVSFIFLLAMIVL. Residues 737–1040 are Cytoplasmic-facing; it reads AVRCQKEKKL…PPYLTRKRIC (304 aa). Positions 899-927 are disordered; that stretch reads AFQEADIVSSKDSGHGDSEQGDSDHDATN. Basic and acidic residues predominate over residues 910–926; the sequence is DSGHGDSEQGDSDHDAT.

In terms of tissue distribution, moderately expressed in all regions of the brain examined, as well as in testis and ovary, and low expression in all other tissues tested.

The protein resides in the cell membrane. In terms of biological role, potential calcium-dependent cell-adhesion protein. (Microbial infection) Acts as a receptor for Western equine encephalitis virus. The protein is Protocadherin-10 (PCDH10) of Homo sapiens (Human).